Reading from the N-terminus, the 462-residue chain is Peroxisomal membrane protein PEX31 (462 aa).

The span at 1 to 19 (MSEINNENLEPTSSTVAES) shows a compositional bias: polar residues. The tract at residues 1–26 (MSEINNENLEPTSSTVAESTESKNKH) is disordered. Over 1–90 (MSEINNENLE…LSIITWSNDN (90 aa)) the chain is Cytoplasmic. A helical transmembrane segment spans residues 91-111 (VSANLLGIFLFTVCVLYFGFI). Residues 112-175 (TRYFGHLMIV…TILSAQDVRR (64 aa)) lie on the Peroxisomal side of the membrane. A helical membrane pass occupies residues 176 to 196 (LLFTIAFLSPVYIFLTVFVLS). Residues 197 to 462 (PNYLMLIGGL…ISDVSMSPSL (266 aa)) are Cytoplasmic-facing. Residues 406 to 425 (PTVEKATPNSHALKSEENNR) are disordered. Serine 432 is modified (phosphoserine). Phosphothreonine is present on threonine 435.

Belongs to the PEX28-32 family. PEX30/31 subfamily.

It is found in the peroxisome membrane. This Saccharomyces cerevisiae (strain ATCC 204508 / S288c) (Baker's yeast) protein is Peroxisomal membrane protein PEX31 (PEX31).